The following is a 437-amino-acid chain: Na(+)/H(+) antiporter NhaA (437 aa).

The next 11 helical transmembrane spans lie at 29-49, 74-94, 111-131, 139-159, 168-188, 196-216, 229-249, 307-327, 341-361, 376-396, and 411-431; these read TAGI…NTAW, LKHW…ALEL, LPVA…LLLV, GWGT…ALLG, LFLL…VAVG, VALG…LLGI, IWLA…ILGL, IALH…SNAG, IAIV…FSFL, WSLL…ALFI, and LGVL…LTLL.

This sequence belongs to the NhaA Na(+)/H(+) (TC 2.A.33) antiporter family.

The protein localises to the cell inner membrane. It catalyses the reaction Na(+)(in) + 2 H(+)(out) = Na(+)(out) + 2 H(+)(in). Functionally, na(+)/H(+) antiporter that extrudes sodium in exchange for external protons. This Rhizobium meliloti (strain 1021) (Ensifer meliloti) protein is Na(+)/H(+) antiporter NhaA.